The sequence spans 688 residues: Methionine--tRNA ligase (688 aa).

The 'HIGH' region motif lies at 13-23; that stretch reads PYANGNFHIGH. Zn(2+) contacts are provided by C144, C147, C157, and C160. Positions 342–346 match the 'KMSKS' region motif; sequence KMSKS. K345 provides a ligand contact to ATP. Residues 582-688 enclose the tRNA-binding domain; the sequence is DFAKVDLRIA…PGAQPGMRIH (107 aa).

It belongs to the class-I aminoacyl-tRNA synthetase family. MetG type 1 subfamily. Homodimer. Requires Zn(2+) as cofactor.

Its subcellular location is the cytoplasm. The catalysed reaction is tRNA(Met) + L-methionine + ATP = L-methionyl-tRNA(Met) + AMP + diphosphate. Its function is as follows. Is required not only for elongation of protein synthesis but also for the initiation of all mRNA translation through initiator tRNA(fMet) aminoacylation. The polypeptide is Methionine--tRNA ligase (Acidovorax sp. (strain JS42)).